Reading from the N-terminus, the 357-residue chain is Large ribosomal subunit protein uL10 (357 aa).

The interval 311–357 (MVSRSAEAAERKEKEEEEEEEAEEEEAEEEEEEEEEEAAAGLGALFG) is disordered. Residues 325–348 (EEEEEEEAEEEEAEEEEEEEEEEA) are compositionally biased toward acidic residues.

This sequence belongs to the universal ribosomal protein uL10 family. Part of the 50S ribosomal subunit. Forms part of the ribosomal stalk which helps the ribosome interact with GTP-bound translation factors. Forms a heptameric L10(L12)2(L12)2(L12)2 complex, where L10 forms an elongated spine to which the L12 dimers bind in a sequential fashion.

Functionally, forms part of the ribosomal stalk, playing a central role in the interaction of the ribosome with GTP-bound translation factors. The polypeptide is Large ribosomal subunit protein uL10 (Methanopyrus kandleri (strain AV19 / DSM 6324 / JCM 9639 / NBRC 100938)).